The chain runs to 75 residues: Microcin H47 (75 aa).

The propeptide occupies 1–15 (MREITESQLRYISGA). A helical membrane pass occupies residues 30-50 (AIVGALAGIPGGPLGVVVGAV).

It localises to the secreted. Its subcellular location is the host cell membrane. Functionally, bactericidal antibiotic. Active on bacteria phylogenetically related to the producing strain. The polypeptide is Microcin H47 (mchB) (Escherichia coli O6:H1 (strain CFT073 / ATCC 700928 / UPEC)).